The following is a 346-amino-acid chain: NADH-ubiquinone oxidoreductase chain 2 (346 aa).

The next 11 helical transmembrane spans lie at 1–21, 25–45, 60–80, 95–115, 124–144, 149–169, 178–195, 200–219, 242–262, 274–294, and 326–346; these read MNPH…TITI, HWVL…PLIS, FLTQ…NAWA, CLLL…HFWF, LMTA…LLLM, LNPA…GWMG, ILAF…IILV, LALL…FMAL, ATLM…GFMP, EMTP…FFYL, and AILA…HAIV.

It belongs to the complex I subunit 2 family.

Its subcellular location is the mitochondrion inner membrane. It carries out the reaction a ubiquinone + NADH + 5 H(+)(in) = a ubiquinol + NAD(+) + 4 H(+)(out). In terms of biological role, core subunit of the mitochondrial membrane respiratory chain NADH dehydrogenase (Complex I) that is believed to belong to the minimal assembly required for catalysis. Complex I functions in the transfer of electrons from NADH to the respiratory chain. The immediate electron acceptor for the enzyme is believed to be ubiquinone. This is NADH-ubiquinone oxidoreductase chain 2 (MT-ND2) from Mareca falcata (Falcated duck).